A 58-amino-acid polypeptide reads, in one-letter code: Basic phospholipase A2 homolog PocTX (58 aa).

The cysteines at positions 29 and 45 are disulfide-linked.

Expressed by the venom gland.

Its subcellular location is the secreted. Wasp venom phospholipase A2 homolog that lacks enzymatic activity. The chain is Basic phospholipase A2 homolog PocTX from Polybia occidentalis (Paper wasp).